We begin with the raw amino-acid sequence, 380 residues long: Phospho-N-acetylmuramoyl-pentapeptide-transferase (380 aa).

The next 11 helical transmembrane spans lie at 26-46 (IVAA…LFIE), 75-95 (MGGA…ADLG), 98-118 (LVWA…WDDW), 135-155 (LVLQ…DWQP), 160-180 (GFPF…PFVP), 183-203 (LFSP…VVAT), 222-242 (IVSS…IAGF), 259-279 (LGVF…YNTY), 283-303 (VFMG…LAVL), 311-331 (AILH…VWSF), and 357-377 (KIIV…LMSL).

It belongs to the glycosyltransferase 4 family. MraY subfamily. Mg(2+) serves as cofactor.

The protein localises to the cell inner membrane. The enzyme catalyses UDP-N-acetyl-alpha-D-muramoyl-L-alanyl-gamma-D-glutamyl-meso-2,6-diaminopimeloyl-D-alanyl-D-alanine + di-trans,octa-cis-undecaprenyl phosphate = di-trans,octa-cis-undecaprenyl diphospho-N-acetyl-alpha-D-muramoyl-L-alanyl-D-glutamyl-meso-2,6-diaminopimeloyl-D-alanyl-D-alanine + UMP. It participates in cell wall biogenesis; peptidoglycan biosynthesis. In terms of biological role, catalyzes the initial step of the lipid cycle reactions in the biosynthesis of the cell wall peptidoglycan: transfers peptidoglycan precursor phospho-MurNAc-pentapeptide from UDP-MurNAc-pentapeptide onto the lipid carrier undecaprenyl phosphate, yielding undecaprenyl-pyrophosphoryl-MurNAc-pentapeptide, known as lipid I. The protein is Phospho-N-acetylmuramoyl-pentapeptide-transferase of Anaeromyxobacter sp. (strain Fw109-5).